The following is a 352-amino-acid chain: tRNA (guanine-N(1)-)-methyltransferase (352 aa).

S-adenosyl-L-methionine contacts are provided by residues glycine 109 and 129-134; that span reads IGDYVL.

The protein belongs to the RNA methyltransferase TrmD family. As to quaternary structure, homodimer.

The protein resides in the cytoplasm. The catalysed reaction is guanosine(37) in tRNA + S-adenosyl-L-methionine = N(1)-methylguanosine(37) in tRNA + S-adenosyl-L-homocysteine + H(+). Specifically methylates guanosine-37 in various tRNAs. The protein is tRNA (guanine-N(1)-)-methyltransferase of Chlamydia trachomatis serovar A (strain ATCC VR-571B / DSM 19440 / HAR-13).